Consider the following 308-residue polypeptide: Glutaminase 2 (308 aa).

Substrate contacts are provided by S66, N117, E161, N168, Y192, Y244, and V262.

This sequence belongs to the glutaminase family. Homotetramer.

It catalyses the reaction L-glutamine + H2O = L-glutamate + NH4(+). The polypeptide is Glutaminase 2 (Escherichia coli O157:H7).